The following is a 433-amino-acid chain: 3-phosphoshikimate 1-carboxyvinyltransferase (433 aa).

Positions 21, 22, and 26 each coordinate 3-phosphoshikimate. A phosphoenolpyruvate-binding site is contributed by K21. G92 and R120 together coordinate phosphoenolpyruvate. The 3-phosphoshikimate site is built by S166, Q168, D317, and K344. A phosphoenolpyruvate-binding site is contributed by Q168. Residue D317 is the Proton acceptor of the active site. Residues R348 and R391 each contribute to the phosphoenolpyruvate site.

The protein belongs to the EPSP synthase family. In terms of assembly, monomer.

The protein localises to the cytoplasm. It carries out the reaction 3-phosphoshikimate + phosphoenolpyruvate = 5-O-(1-carboxyvinyl)-3-phosphoshikimate + phosphate. The protein operates within metabolic intermediate biosynthesis; chorismate biosynthesis; chorismate from D-erythrose 4-phosphate and phosphoenolpyruvate: step 6/7. Its function is as follows. Catalyzes the transfer of the enolpyruvyl moiety of phosphoenolpyruvate (PEP) to the 5-hydroxyl of shikimate-3-phosphate (S3P) to produce enolpyruvyl shikimate-3-phosphate and inorganic phosphate. The polypeptide is 3-phosphoshikimate 1-carboxyvinyltransferase (Caldicellulosiruptor saccharolyticus (strain ATCC 43494 / DSM 8903 / Tp8T 6331)).